Reading from the N-terminus, the 475-residue chain is Aspartyl/glutamyl-tRNA(Asn/Gln) amidotransferase subunit B (475 aa).

This sequence belongs to the GatB/GatE family. GatB subfamily. In terms of assembly, heterotrimer of A, B and C subunits.

It carries out the reaction L-glutamyl-tRNA(Gln) + L-glutamine + ATP + H2O = L-glutaminyl-tRNA(Gln) + L-glutamate + ADP + phosphate + H(+). The catalysed reaction is L-aspartyl-tRNA(Asn) + L-glutamine + ATP + H2O = L-asparaginyl-tRNA(Asn) + L-glutamate + ADP + phosphate + 2 H(+). Allows the formation of correctly charged Asn-tRNA(Asn) or Gln-tRNA(Gln) through the transamidation of misacylated Asp-tRNA(Asn) or Glu-tRNA(Gln) in organisms which lack either or both of asparaginyl-tRNA or glutaminyl-tRNA synthetases. The reaction takes place in the presence of glutamine and ATP through an activated phospho-Asp-tRNA(Asn) or phospho-Glu-tRNA(Gln). The chain is Aspartyl/glutamyl-tRNA(Asn/Gln) amidotransferase subunit B from Chlorobium phaeobacteroides (strain BS1).